The sequence spans 474 residues: Probable fucosyltransferase 9 (474 aa).

The helical; Signal-anchor for type II membrane protein transmembrane segment at 1-21 (MIKLTIAIATCLVLCLVLLLP) threads the bilayer. The Lumenal portion of the chain corresponds to 22-474 (SSNISYRHKY…LKLVDVSDEL (453 aa)). N-linked (GlcNAc...) asparagine glycosylation is found at asparagine 24, asparagine 39, and asparagine 208.

The protein belongs to the glycosyltransferase 37 family. Expressed in leaves and stems.

The protein resides in the golgi apparatus. It localises to the golgi stack membrane. Its pathway is protein modification; protein glycosylation. Its function is as follows. May be involved in cell wall biosynthesis. May act as a fucosyltransferase. The chain is Probable fucosyltransferase 9 (FUT9) from Arabidopsis thaliana (Mouse-ear cress).